A 199-amino-acid chain; its full sequence is Recombination protein RecR (199 aa).

Residues 58–73 (CQTCRILSETDLCSLC) form a C4-type zinc finger. The Toprim domain maps to 81–176 (GQLCVVEMPS…TTTRIAHGVP (96 aa)).

Belongs to the RecR family.

In terms of biological role, may play a role in DNA repair. It seems to be involved in an RecBC-independent recombinational process of DNA repair. It may act with RecF and RecO. The sequence is that of Recombination protein RecR from Nitrosococcus oceani (strain ATCC 19707 / BCRC 17464 / JCM 30415 / NCIMB 11848 / C-107).